The sequence spans 160 residues: Monooxygenase AacuO (160 aa).

This sequence belongs to the avfA family.

Its pathway is secondary metabolite biosynthesis. In terms of biological role, monooxygenase; part of the gene cluster that mediates the biosynthesis of the tetrahydroxanthone dimer secalonic acid D. The pathway begins with the synthesis of atrochrysone thioester by the polyketide synthase AacuL. The atrochrysone carboxyl ACP thioesterase AacuM then breaks the thioester bond and releases the atrochrysone carboxylic acid from AacuL. Atrochrysone carboxylic acid is decarboxylated by the decarboxylase AacuI, and oxidized by the anthrone oxygenase AacuG to yield emodin. Emodin is then reduced to emodin hydroquinone by a yet unidentified oxidoreductase. A-ring reduction by the short chain dehydrogenase AacuN, dehydration by the scytalone dehydratase-like protein AacuK and probable spontaneous re-oxidation, results in overall deoxygenation to chrysophanol. Baeyer-Villiger oxidation by the Baeyer-Villiger monooxygenase (BVMO) AacuH then yields monodictyphenone. Monodictyphenone is transformed into compounds with the tetrahydroxanthone skeleton via methylesterification by the methyltransferase AacuQ, followed by the action of the flavin-dependent monooxygenase AacuC, the isomerase AacuP, and the short chain dehydrogenase/reductase AacuF or AacuD. AacuF and AacuD should accept the same compound as a substrate but perform the ketoreduction with a different stereoselectivity, thus yielding blennolides B and A, respectively. In the final step of the biosynthesis, the cytochrome P450 monooxygenase AacuE accepts blennolide B and/or blennolide A to conduct the dimerization reaction to furnish the tetrahydroxanthone dimers, secalonic acids D, B, and F. In Aspergillus aculeatus (strain ATCC 16872 / CBS 172.66 / WB 5094), this protein is Monooxygenase AacuO.